We begin with the raw amino-acid sequence, 257 residues long: Imidazole glycerol phosphate synthase subunit HisF (257 aa).

Active-site residues include D11 and D130.

It belongs to the HisA/HisF family. As to quaternary structure, heterodimer of HisH and HisF.

The protein localises to the cytoplasm. It catalyses the reaction 5-[(5-phospho-1-deoxy-D-ribulos-1-ylimino)methylamino]-1-(5-phospho-beta-D-ribosyl)imidazole-4-carboxamide + L-glutamine = D-erythro-1-(imidazol-4-yl)glycerol 3-phosphate + 5-amino-1-(5-phospho-beta-D-ribosyl)imidazole-4-carboxamide + L-glutamate + H(+). It functions in the pathway amino-acid biosynthesis; L-histidine biosynthesis; L-histidine from 5-phospho-alpha-D-ribose 1-diphosphate: step 5/9. In terms of biological role, IGPS catalyzes the conversion of PRFAR and glutamine to IGP, AICAR and glutamate. The HisF subunit catalyzes the cyclization activity that produces IGP and AICAR from PRFAR using the ammonia provided by the HisH subunit. The protein is Imidazole glycerol phosphate synthase subunit HisF of Pseudoalteromonas atlantica (strain T6c / ATCC BAA-1087).